A 316-amino-acid chain; its full sequence is Acetyl-coenzyme A carboxylase carboxyl transferase subunit alpha (316 aa).

The region spanning 40-293 is the CoA carboxyltransferase C-terminal domain; the sequence is LEKRSRDALR…GDLIAKTMKE (254 aa).

It belongs to the AccA family. As to quaternary structure, acetyl-CoA carboxylase is a heterohexamer composed of biotin carboxyl carrier protein (AccB), biotin carboxylase (AccC) and two subunits each of ACCase subunit alpha (AccA) and ACCase subunit beta (AccD).

The protein resides in the cytoplasm. The enzyme catalyses N(6)-carboxybiotinyl-L-lysyl-[protein] + acetyl-CoA = N(6)-biotinyl-L-lysyl-[protein] + malonyl-CoA. The protein operates within lipid metabolism; malonyl-CoA biosynthesis; malonyl-CoA from acetyl-CoA: step 1/1. Functionally, component of the acetyl coenzyme A carboxylase (ACC) complex. First, biotin carboxylase catalyzes the carboxylation of biotin on its carrier protein (BCCP) and then the CO(2) group is transferred by the carboxyltransferase to acetyl-CoA to form malonyl-CoA. The chain is Acetyl-coenzyme A carboxylase carboxyl transferase subunit alpha from Mesorhizobium japonicum (strain LMG 29417 / CECT 9101 / MAFF 303099) (Mesorhizobium loti (strain MAFF 303099)).